The sequence spans 556 residues: ATP synthase subunit alpha 2 (556 aa).

177–184 (GDRATGKT) serves as a coordination point for ATP. Positions 514–556 (GGHAEDAADDMGGALDGEHASGDATSIAPTPPGGAEAGAPRKR) are disordered. The span at 546–556 (GGAEAGAPRKR) shows a compositional bias: low complexity.

Belongs to the ATPase alpha/beta chains family. As to quaternary structure, F-type ATPases have 2 components, CF(1) - the catalytic core - and CF(0) - the membrane proton channel. CF(1) has five subunits: alpha(3), beta(3), gamma(1), delta(1), epsilon(1). CF(0) has three main subunits: a(1), b(2) and c(9-12). The alpha and beta chains form an alternating ring which encloses part of the gamma chain. CF(1) is attached to CF(0) by a central stalk formed by the gamma and epsilon chains, while a peripheral stalk is formed by the delta and b chains.

It is found in the cell inner membrane. The catalysed reaction is ATP + H2O + 4 H(+)(in) = ADP + phosphate + 5 H(+)(out). Functionally, produces ATP from ADP in the presence of a proton gradient across the membrane. The alpha chain is a regulatory subunit. This chain is ATP synthase subunit alpha 2, found in Burkholderia thailandensis (strain ATCC 700388 / DSM 13276 / CCUG 48851 / CIP 106301 / E264).